We begin with the raw amino-acid sequence, 435 residues long: Xylose isomerase (435 aa).

Aspartate 306 and aspartate 308 together coordinate Mg(2+).

This sequence belongs to the xylose isomerase family. Homotetramer. Mg(2+) serves as cofactor.

Its subcellular location is the cytoplasm. The catalysed reaction is alpha-D-xylose = alpha-D-xylulofuranose. This chain is Xylose isomerase, found in Allorhizobium ampelinum (strain ATCC BAA-846 / DSM 112012 / S4) (Agrobacterium vitis (strain S4)).